Consider the following 817-residue polypeptide: Lon protease 1 (817 aa).

Positions 18 to 216 (VPLLPLRDII…KLYELMQGEI (199 aa)) constitute a Lon N-terminal domain. 368-375 (GPPGVGKT) contributes to the ATP binding site. A Lon proteolytic domain is found at 604 to 785 (EDQVGIVTGL…DDVLREALVL (182 aa)). Catalysis depends on residues Ser691 and Lys734. The disordered stretch occupies residues 789–817 (EEFGRKPTTDGGKLGGTTELPASPAVAPA).

Belongs to the peptidase S16 family. In terms of assembly, homohexamer. Organized in a ring with a central cavity.

It localises to the cytoplasm. It carries out the reaction Hydrolysis of proteins in presence of ATP.. ATP-dependent serine protease that mediates the selective degradation of mutant and abnormal proteins as well as certain short-lived regulatory proteins. Required for cellular homeostasis and for survival from DNA damage and developmental changes induced by stress. Degrades polypeptides processively to yield small peptide fragments that are 5 to 10 amino acids long. Binds to DNA in a double-stranded, site-specific manner. In Myxococcus xanthus, this protein is Lon protease 1.